The following is a 393-amino-acid chain: 4-hydroxyphenylpyruvate dioxygenase (393 aa).

Thr2 is modified (N-acetylthreonine). VOC domains follow at residues His18 to Phe152 and Ile180 to Lys338. Residue His183 coordinates Fe cation. 3 positions are modified to phosphoserine: Ser211, Ser226, and Ser250. 2 residues coordinate Fe cation: His266 and Glu349.

This sequence belongs to the 4HPPD family. In terms of assembly, homodimer. The cofactor is Fe cation. As to expression, liver.

The protein resides in the cytoplasm. The protein localises to the endoplasmic reticulum membrane. It localises to the golgi apparatus membrane. The catalysed reaction is 3-(4-hydroxyphenyl)pyruvate + O2 = homogentisate + CO2. The protein operates within amino-acid degradation; L-phenylalanine degradation; acetoacetate and fumarate from L-phenylalanine: step 3/6. Catalyzes the conversion of 4-hydroxyphenylpyruvic acid to homogentisic acid, one of the steps in tyrosine catabolism. This chain is 4-hydroxyphenylpyruvate dioxygenase (HPD), found in Sus scrofa (Pig).